Consider the following 170-residue polypeptide: Crossover junction endodeoxyribonuclease RuvC (170 aa).

Residues aspartate 11, glutamate 71, and aspartate 143 contribute to the active site. Mg(2+) contacts are provided by aspartate 11, glutamate 71, and aspartate 143.

Belongs to the RuvC family. As to quaternary structure, homodimer which binds Holliday junction (HJ) DNA. The HJ becomes 2-fold symmetrical on binding to RuvC with unstacked arms; it has a different conformation from HJ DNA in complex with RuvA. In the full resolvosome a probable DNA-RuvA(4)-RuvB(12)-RuvC(2) complex forms which resolves the HJ. Mg(2+) serves as cofactor.

It is found in the cytoplasm. It catalyses the reaction Endonucleolytic cleavage at a junction such as a reciprocal single-stranded crossover between two homologous DNA duplexes (Holliday junction).. Its function is as follows. The RuvA-RuvB-RuvC complex processes Holliday junction (HJ) DNA during genetic recombination and DNA repair. Endonuclease that resolves HJ intermediates. Cleaves cruciform DNA by making single-stranded nicks across the HJ at symmetrical positions within the homologous arms, yielding a 5'-phosphate and a 3'-hydroxyl group; requires a central core of homology in the junction. The consensus cleavage sequence is 5'-(A/T)TT(C/G)-3'. Cleavage occurs on the 3'-side of the TT dinucleotide at the point of strand exchange. HJ branch migration catalyzed by RuvA-RuvB allows RuvC to scan DNA until it finds its consensus sequence, where it cleaves and resolves the cruciform DNA. The chain is Crossover junction endodeoxyribonuclease RuvC from Rhizobium rhizogenes (strain K84 / ATCC BAA-868) (Agrobacterium radiobacter).